A 122-amino-acid chain; its full sequence is Large ribosomal subunit protein uL14c (122 aa).

This sequence belongs to the universal ribosomal protein uL14 family. Part of the 50S ribosomal subunit.

It is found in the plastid. The protein localises to the chloroplast. Functionally, binds to 23S rRNA. In Eucalyptus globulus subsp. globulus (Tasmanian blue gum), this protein is Large ribosomal subunit protein uL14c.